We begin with the raw amino-acid sequence, 446 residues long: Exodeoxyribonuclease 7 large subunit (446 aa).

Belongs to the XseA family. As to quaternary structure, heterooligomer composed of large and small subunits.

Its subcellular location is the cytoplasm. The catalysed reaction is Exonucleolytic cleavage in either 5'- to 3'- or 3'- to 5'-direction to yield nucleoside 5'-phosphates.. Bidirectionally degrades single-stranded DNA into large acid-insoluble oligonucleotides, which are then degraded further into small acid-soluble oligonucleotides. This is Exodeoxyribonuclease 7 large subunit from Xanthomonas campestris pv. campestris (strain B100).